Reading from the N-terminus, the 158-residue chain is MSEKNKQNDIKVIATNRKAYHDYFIEETIEAGIELKGTEVKSVRLGHVNLKDSFARVENGEVFLYNMHISPYEKGNIFNVDPMRDRKLLLHKHEINRLAGYVQQKGYTLIPLKIYIKRGKIKVELAVAKGKKLYDKREAIAKRDAELEIRKKMKEYLR.

Belongs to the SmpB family.

It localises to the cytoplasm. Its function is as follows. Required for rescue of stalled ribosomes mediated by trans-translation. Binds to transfer-messenger RNA (tmRNA), required for stable association of tmRNA with ribosomes. tmRNA and SmpB together mimic tRNA shape, replacing the anticodon stem-loop with SmpB. tmRNA is encoded by the ssrA gene; the 2 termini fold to resemble tRNA(Ala) and it encodes a 'tag peptide', a short internal open reading frame. During trans-translation Ala-aminoacylated tmRNA acts like a tRNA, entering the A-site of stalled ribosomes, displacing the stalled mRNA. The ribosome then switches to translate the ORF on the tmRNA; the nascent peptide is terminated with the 'tag peptide' encoded by the tmRNA and targeted for degradation. The ribosome is freed to recommence translation, which seems to be the essential function of trans-translation. The polypeptide is SsrA-binding protein (Caldicellulosiruptor bescii (strain ATCC BAA-1888 / DSM 6725 / KCTC 15123 / Z-1320) (Anaerocellum thermophilum)).